We begin with the raw amino-acid sequence, 347 residues long: N-acetyl-gamma-glutamyl-phosphate reductase (347 aa).

Cysteine 150 is an active-site residue.

Belongs to the NAGSA dehydrogenase family. Type 1 subfamily.

It localises to the cytoplasm. The enzyme catalyses N-acetyl-L-glutamate 5-semialdehyde + phosphate + NADP(+) = N-acetyl-L-glutamyl 5-phosphate + NADPH + H(+). The protein operates within amino-acid biosynthesis; L-arginine biosynthesis; N(2)-acetyl-L-ornithine from L-glutamate: step 3/4. Its function is as follows. Catalyzes the NADPH-dependent reduction of N-acetyl-5-glutamyl phosphate to yield N-acetyl-L-glutamate 5-semialdehyde. This chain is N-acetyl-gamma-glutamyl-phosphate reductase, found in Leifsonia xyli subsp. xyli (strain CTCB07).